The following is a 244-amino-acid chain: Small ribosomal subunit protein uS3 (244 aa).

Residues 39–110 form the KH type-2 domain; the sequence is IRNFIQKKYS…QVRINVVEVE (72 aa). The disordered stretch occupies residues 221 to 244; sequence GAIPRRKGSRKPQQFEDRSSNENS. The segment covering 233-244 has biased composition (basic and acidic residues); it reads QQFEDRSSNENS.

This sequence belongs to the universal ribosomal protein uS3 family. Part of the 30S ribosomal subunit. Forms a tight complex with proteins S10 and S14.

Functionally, binds the lower part of the 30S subunit head. Binds mRNA in the 70S ribosome, positioning it for translation. The protein is Small ribosomal subunit protein uS3 of Prochlorococcus marinus (strain MIT 9515).